A 477-amino-acid chain; its full sequence is Ankyrin repeat, SAM and basic leucine zipper domain-containing protein 1 (477 aa).

Phosphoserine is present on residues S17, S18, and S20. 6 ANK repeats span residues 46–76, 80–109, 112–146, 150–179, 183–212, and 216–245; these read EKKE…SVDA, YGWT…NASF, DKQT…DPNV, RLMT…EVNT, NGYT…NKML, and DGKL…PLEG. Residues 274-336 form the SAM domain; it reads SYAAFGDLEV…KILTALKELE (63 aa).

Interacts with DDX4, PIWIL1, RANBP9 and TDRD1.

The protein resides in the cytoplasm. Plays a central role during spermatogenesis by repressing transposable elements and preventing their mobilization, which is essential for the germline integrity. Acts via the piRNA metabolic process, which mediates the repression of transposable elements during meiosis by forming complexes composed of piRNAs and Piwi proteins and governs the methylation and subsequent repression of transposons. Its association with pi-bodies suggests a participation in the primary piRNAs metabolic process. Required prior to the pachytene stage to facilitate the production of multiple types of piRNAs, including those associated with repeats involved in the regulation of retrotransposons. May act by mediating protein-protein interactions during germ cell maturation. The sequence is that of Ankyrin repeat, SAM and basic leucine zipper domain-containing protein 1 (ASZ1) from Ateles geoffroyi (Black-handed spider monkey).